An 821-amino-acid polypeptide reads, in one-letter code: Calpain-3 (821 aa).

Residues 7–37 (ASVAPRTAAEPRSPGPVPHPAQSKATEAGGG) are disordered. The region spanning 74–417 (LYVDPEFPPD…FTKLEICNLT (344 aa)) is the Calpain catalytic domain. Residues C129, H334, and N358 contribute to the active site. Residues 418-586 (ADALQSDKLQ…KRNLSEEVEN (169 aa)) form a domain III region. The interval 587-649 (TISVDRPVKK…QPGSSDQESE (63 aa)) is linker. Positions 609-652 (ANSNKELGVDQESEEGKGKTSPDKQKQSPQPQPGSSDQESEEQQ) are disordered. The segment covering 622 to 634 (EEGKGKTSPDKQK) has biased composition (basic and acidic residues). Residues 635 to 645 (QSPQPQPGSSD) are compositionally biased toward low complexity. EF-hand domains follow at residues 649 to 683 (EEQQQFRNIFKQIAGDDMEICADELKKVLNTVVNK), 692 to 725 (FTLESCRSMIALMDTDGSGKLNLQEFHHLWNKIK), 722 to 757 (NKIKAWQKIFKHYDTDQSGTINSYEMRNAVNDAGFH), and 787 to 821 (VRLEGMFRAFHAFDKDGDGIIKLNVLEWLQLTMYA). Positions 650–821 (EQQQFRNIFK…LEWLQLTMYA (172 aa)) are domain IV. Ca(2+) is bound by residues A662, D665, E667, E672, D705, D707, S709, K711, E716, D735, D737, S739, T741, E746, D800, D802, D804, and I806.

Belongs to the peptidase C2 family. Homodimer; via EF-hand domain 4. Interacts with TTN/titin. Interacts with CMYA5; this interaction, which results in CMYA5 proteolysis, may protect CAPN3 from autolysis. Interacts with SIMC1. Interacts with UTP25; the interaction is required for CAPN3 translocation to the nucleolus. Isoform I is skeletal muscle specific.

Its subcellular location is the cytoplasm. The protein localises to the nucleus. It is found in the nucleolus. The catalysed reaction is Broad endopeptidase activity.. Activated by micromolar concentrations of calcium and inhibited by calpastatin. Functionally, calcium-regulated non-lysosomal thiol-protease. Proteolytically cleaves CTBP1 at 'His-409'. Mediates, with UTP25, the proteasome-independent degradation of p53/TP53. The sequence is that of Calpain-3 from Homo sapiens (Human).